The following is a 496-amino-acid chain: Sugar transporter ERD6 (496 aa).

The next 6 helical transmembrane spans lie at 58–78 (VFLSTFVAVSGSFCTGCGVGF), 94–114 (VAEYSMFGSILTLGGLIGAVF), 128–148 (MLFCEFFCITGWLCVALAQNA), 156–176 (LLLGIGVGIFSYVIPVYIAEI), 183–203 (GSFVFANQLMQNCGISLFFII), and 211–231 (LLTVVGLVPCVFHVFCLFFIP). S256 is modified (phosphoserine). 6 consecutive transmembrane segments (helical) span residues 292-312 (YPLIIGVGLMFLQQLCGSSGV), 329-349 (IGTSVIATIMVPKAMLATVLV), 364-384 (AMGLSALLLSVSYGFQSFGIL), 394-414 (IGVLGHIVSFAMGMGGLPWII), 430-450 (LVTVTNWLFGWIITYTFNFML), and 456-476 (GMFLIFSMVSASSIVFIYFLV).

This sequence belongs to the major facilitator superfamily. Sugar transporter (TC 2.A.1.1) family. In terms of tissue distribution, expressed in both shoots and roots. In roots, expressed in epidermal cells and especially strongly in cortex cells. In flowers, expressed in sepals.

The protein resides in the membrane. In terms of biological role, sugar transporter. The protein is Sugar transporter ERD6 (ERD6) of Arabidopsis thaliana (Mouse-ear cress).